The following is a 129-amino-acid chain: Small ribosomal subunit protein uS11 (129 aa).

This sequence belongs to the universal ribosomal protein uS11 family. Part of the 30S ribosomal subunit. Interacts with proteins S7 and S18. Binds to IF-3.

In terms of biological role, located on the platform of the 30S subunit, it bridges several disparate RNA helices of the 16S rRNA. Forms part of the Shine-Dalgarno cleft in the 70S ribosome. The sequence is that of Small ribosomal subunit protein uS11 from Bacillus cytotoxicus (strain DSM 22905 / CIP 110041 / 391-98 / NVH 391-98).